The sequence spans 318 residues: Acetyl-coenzyme A carboxylase carboxyl transferase subunit alpha (318 aa).

The region spanning K39–E293 is the CoA carboxyltransferase C-terminal domain.

The protein belongs to the AccA family. In terms of assembly, acetyl-CoA carboxylase is a heterohexamer composed of biotin carboxyl carrier protein (AccB), biotin carboxylase (AccC) and two subunits each of ACCase subunit alpha (AccA) and ACCase subunit beta (AccD).

It localises to the cytoplasm. It carries out the reaction N(6)-carboxybiotinyl-L-lysyl-[protein] + acetyl-CoA = N(6)-biotinyl-L-lysyl-[protein] + malonyl-CoA. It participates in lipid metabolism; malonyl-CoA biosynthesis; malonyl-CoA from acetyl-CoA: step 1/1. Functionally, component of the acetyl coenzyme A carboxylase (ACC) complex. First, biotin carboxylase catalyzes the carboxylation of biotin on its carrier protein (BCCP) and then the CO(2) group is transferred by the carboxyltransferase to acetyl-CoA to form malonyl-CoA. In Geobacter metallireducens (strain ATCC 53774 / DSM 7210 / GS-15), this protein is Acetyl-coenzyme A carboxylase carboxyl transferase subunit alpha.